Here is a 469-residue protein sequence, read N- to C-terminus: Tubulin gamma-2 chain (469 aa).

142–148 (AGGTGSG) contacts GTP.

It belongs to the tubulin family.

The protein localises to the cytoplasm. It localises to the cytoskeleton. Its subcellular location is the microtubule organizing center. In terms of biological role, tubulin is the major constituent of microtubules. The gamma chain is found at microtubule organizing centers (MTOC) such as the spindle poles, suggesting that it is involved in the minus-end nucleation of microtubule assembly. The chain is Tubulin gamma-2 chain (TUBG2) from Zea mays (Maize).